The chain runs to 55 residues: Protein CADMIUM TOLERANCE 1 (55 aa).

A helical transmembrane segment spans residues 24 to 40; it reads GCLYACIFTALCCFCCY.

Belongs to the CYSTM1 family.

Its subcellular location is the cell membrane. It localises to the secreted. The protein resides in the cell wall. In terms of biological role, confers resistance to heavy metal ions (e.g. cadmium (CdCl(2)) and copper (CuCl(2))) by chelating them at the plasma membrane of root cells, thus stopping their entry and reducing their accumulation. This chain is Protein CADMIUM TOLERANCE 1, found in Digitaria ciliaris (Southern crabgrass).